Here is a 303-residue protein sequence, read N- to C-terminus: N-acetyl-D-glucosamine kinase (303 aa).

Residues 4–11 and 133–140 contribute to the ATP site; these read GFDVGGTK and GFGGGLIY. Zn(2+)-binding residues include His157, Cys177, Cys179, and Cys184.

Belongs to the ROK (NagC/XylR) family. NagK subfamily.

The catalysed reaction is N-acetyl-D-glucosamine + ATP = N-acetyl-D-glucosamine 6-phosphate + ADP + H(+). It functions in the pathway cell wall biogenesis; peptidoglycan recycling. Its function is as follows. Catalyzes the phosphorylation of N-acetyl-D-glucosamine (GlcNAc) derived from cell-wall degradation, yielding GlcNAc-6-P. This Vibrio vulnificus (strain CMCP6) protein is N-acetyl-D-glucosamine kinase.